Reading from the N-terminus, the 189-residue chain is UPF0301 protein CTA_0231 (189 aa).

The protein belongs to the UPF0301 (AlgH) family.

The polypeptide is UPF0301 protein CTA_0231 (Chlamydia trachomatis serovar A (strain ATCC VR-571B / DSM 19440 / HAR-13)).